The following is a 377-amino-acid chain: Anhydro-N-acetylmuramic acid kinase (377 aa).

Glycine 14–aspartate 21 serves as a coordination point for ATP.

The protein belongs to the anhydro-N-acetylmuramic acid kinase family.

It catalyses the reaction 1,6-anhydro-N-acetyl-beta-muramate + ATP + H2O = N-acetyl-D-muramate 6-phosphate + ADP + H(+). The protein operates within amino-sugar metabolism; 1,6-anhydro-N-acetylmuramate degradation. It functions in the pathway cell wall biogenesis; peptidoglycan recycling. Functionally, catalyzes the specific phosphorylation of 1,6-anhydro-N-acetylmuramic acid (anhMurNAc) with the simultaneous cleavage of the 1,6-anhydro ring, generating MurNAc-6-P. Is required for the utilization of anhMurNAc either imported from the medium or derived from its own cell wall murein, and thus plays a role in cell wall recycling. The sequence is that of Anhydro-N-acetylmuramic acid kinase from Pasteurella multocida (strain Pm70).